Consider the following 91-residue polypeptide: Large ribosomal subunit protein uL23c (91 aa).

The protein belongs to the universal ribosomal protein uL23 family. Part of the 50S ribosomal subunit.

Its subcellular location is the plastid. The protein resides in the chloroplast. Its function is as follows. Binds to 23S rRNA. The protein is Large ribosomal subunit protein uL23c (rpl23) of Chaetosphaeridium globosum (Charophycean green alga).